The chain runs to 182 residues: Adenine phosphoribosyltransferase (182 aa).

133 to 137 is an AMP binding site; that stretch reads ATGGS.

Belongs to the purine/pyrimidine phosphoribosyltransferase family. In terms of assembly, homodimer. Mg(2+) serves as cofactor.

It is found in the cytoplasm. Its subcellular location is the nucleus. The enzyme catalyses AMP + diphosphate = 5-phospho-alpha-D-ribose 1-diphosphate + adenine. The protein operates within purine metabolism; AMP biosynthesis via salvage pathway; AMP from adenine: step 1/1. Catalyzes a salvage reaction resulting in the formation of AMP, that is energically less costly than de novo synthesis. The chain is Adenine phosphoribosyltransferase (APT1) from Yarrowia lipolytica (strain CLIB 122 / E 150) (Yeast).